The following is a 277-amino-acid chain: Phosphate import ATP-binding protein PstB (277 aa).

The 242-residue stretch at 31 to 272 (IEVPGLSLYY…PAKKQTEDYI (242 aa)) folds into the ABC transporter domain. ATP is bound at residue 63–70 (GPSGCGKS).

Belongs to the ABC transporter superfamily. Phosphate importer (TC 3.A.1.7) family. As to quaternary structure, the complex is composed of two ATP-binding proteins (PstB), two transmembrane proteins (PstC and PstA) and a solute-binding protein (PstS).

The protein resides in the cell inner membrane. It carries out the reaction phosphate(out) + ATP + H2O = ADP + 2 phosphate(in) + H(+). Part of the ABC transporter complex PstSACB involved in phosphate import. Responsible for energy coupling to the transport system. This chain is Phosphate import ATP-binding protein PstB, found in Pseudomonas fluorescens (strain ATCC BAA-477 / NRRL B-23932 / Pf-5).